We begin with the raw amino-acid sequence, 192 residues long: ATP-dependent Clp protease proteolytic subunit 1 (192 aa).

Serine 92 (nucleophile) is an active-site residue. The active site involves histidine 117.

It belongs to the peptidase S14 family. Fourteen ClpP subunits assemble into 2 heptameric rings which stack back to back to give a disk-like structure with a central cavity, resembling the structure of eukaryotic proteasomes.

The protein resides in the cytoplasm. The enzyme catalyses Hydrolysis of proteins to small peptides in the presence of ATP and magnesium. alpha-casein is the usual test substrate. In the absence of ATP, only oligopeptides shorter than five residues are hydrolyzed (such as succinyl-Leu-Tyr-|-NHMec, and Leu-Tyr-Leu-|-Tyr-Trp, in which cleavage of the -Tyr-|-Leu- and -Tyr-|-Trp bonds also occurs).. Its function is as follows. Cleaves peptides in various proteins in a process that requires ATP hydrolysis. Has a chymotrypsin-like activity. Plays a major role in the degradation of misfolded proteins. The polypeptide is ATP-dependent Clp protease proteolytic subunit 1 (Chlamydia abortus (strain DSM 27085 / S26/3) (Chlamydophila abortus)).